Here is a 510-residue protein sequence, read N- to C-terminus: Histidine ammonia-lyase (510 aa).

A cross-link (5-imidazolinone (Ala-Gly)) is located at residues 143–145 (ASG). A 2,3-didehydroalanine (Ser) modification is found at serine 144.

Belongs to the PAL/histidase family. Contains an active site 4-methylidene-imidazol-5-one (MIO), which is formed autocatalytically by cyclization and dehydration of residues Ala-Ser-Gly.

It is found in the cytoplasm. The catalysed reaction is L-histidine = trans-urocanate + NH4(+). It functions in the pathway amino-acid degradation; L-histidine degradation into L-glutamate; N-formimidoyl-L-glutamate from L-histidine: step 1/3. The protein is Histidine ammonia-lyase of Pseudomonas putida (strain ATCC 47054 / DSM 6125 / CFBP 8728 / NCIMB 11950 / KT2440).